A 588-amino-acid polypeptide reads, in one-letter code: MLHLHHSWLCFRSWLAGMLSVLLGLVPSASSNISTSRPNILLLMADDLGIGDIGCYGNNTMRTPNIDRLAEDGVKLTQHISAASLCTPSRAAFLTGRYPVRSGMVSSIGYRVLQWTGASGGLPTNETTFAKILKEKGYATGLIGKWHLGLNCESASDHCHHPLHHGFDHFYGMPFSLMGDCAHWELSEKRVNLEQKLNFLFQVLALVALTLVAGKLTHLIPVSWTPVIWSALWAVLLLTGSYFVGALIVHAGCLLMRNHTITEQPMRFQKTTPLILQEVASFLKRNKHGPFLLFVSFLHVHIPLITMENFLGKSLHGLYGDNVEEMDWMVGQILDTLDMEGLTNSTLIYFTSDHGGSLENQLGRTQYGGWNGIYKGGKGMGGWEGGIRVPGIFRWPGVLPAGQVIGEPTSLMDVFPTVVQLAGGEVPQDRVIDGQDLLPLLLGTAQHSDHEFLMHYCEGFLHAARWHQRDRTTWKVHFVTPVFQPEGAGACYGRKVCPCFGEKVLHHDPPLLFDLSRDPSETHVLTPASEPVFYQVMERVQRAVREHQRTLSPVPLQLDRLGNIWRPWLQPSCGPFPLCWCLREDGPQ.

A signal peptide spans 1 to 31 (MLHLHHSWLCFRSWLAGMLSVLLGLVPSASS). N32 carries N-linked (GlcNAc...) asparagine glycosylation. 2 residues coordinate Ca(2+): D46 and D47. Residue N58 is glycosylated (N-linked (GlcNAc...) asparagine). C86 provides a ligand contact to Ca(2+). C86 (nucleophile) is an active-site residue. C86 is modified (3-oxoalanine (Cys)). N-linked (GlcNAc...) asparagine glycosylation is present at N125. K145 lines the substrate pocket. The active site involves H147. An N-linked (GlcNAc...) asparagine glycan is attached at N258. H301 provides a ligand contact to substrate. The N-linked (GlcNAc...) asparagine glycan is linked to N344. 2 residues coordinate Ca(2+): D353 and H354. Position 378 (K378) interacts with substrate.

The protein belongs to the sulfatase family. Requires Ca(2+) as cofactor. In terms of processing, the conversion to 3-oxoalanine (also known as C-formylglycine, FGly), of a serine or cysteine residue in prokaryotes and of a cysteine residue in eukaryotes, is critical for catalytic activity.

It is found in the golgi apparatus. The protein resides in the golgi stack. It carries out the reaction an aryl sulfate + H2O = a phenol + sulfate + H(+). In terms of biological role, exhibits arylsulfatase activity towards the artificial substrate 4-methylumbelliferyl sulfate. May be essential for the correct composition of cartilage and bone matrix during development. Has no activity toward steroid sulfates. In Macaca fascicularis (Crab-eating macaque), this protein is Arylsulfatase L (ARSL).